The chain runs to 359 residues: Fructose-bisphosphate aldolase (359 aa).

Residue Ser62 coordinates D-glyceraldehyde 3-phosphate. The Proton donor role is filled by Asp109. Residues His110, Asp144, Glu174, and His226 each contribute to the Zn(2+) site. Residue Gly227 coordinates dihydroxyacetone phosphate. His265 provides a ligand contact to Zn(2+). Dihydroxyacetone phosphate-binding positions include 266 to 268 (GGS) and 287 to 290 (NLDT).

It belongs to the class II fructose-bisphosphate aldolase family. As to quaternary structure, homodimer. Zn(2+) serves as cofactor.

The protein resides in the cytoplasm. It catalyses the reaction beta-D-fructose 1,6-bisphosphate = D-glyceraldehyde 3-phosphate + dihydroxyacetone phosphate. Its pathway is carbohydrate degradation; glycolysis; D-glyceraldehyde 3-phosphate and glycerone phosphate from D-glucose: step 4/4. In terms of biological role, catalyzes the aldol condensation of dihydroxyacetone phosphate (DHAP or glycerone-phosphate) with glyceraldehyde 3-phosphate (G3P) to form fructose 1,6-bisphosphate (FBP) in gluconeogenesis and the reverse reaction in glycolysis. In Candida albicans (strain SC5314 / ATCC MYA-2876) (Yeast), this protein is Fructose-bisphosphate aldolase (FBA1).